We begin with the raw amino-acid sequence, 102 residues long: RNA-binding protein Hfq (102 aa).

Residues 9–68 form the Sm domain; that stretch reads DPFLNALRRERVPVSIYLVNGIKLQGQIESFDQFVILLKNTVSQMVYKHAISTVVPSRPV. Residues 65 to 102 form a disordered region; the sequence is SRPVSHHSSNTSVGASVGNYHSGGVSAPAAQQESDGTE. Residues 93-102 are compositionally biased toward polar residues; sequence AAQQESDGTE.

Belongs to the Hfq family. In terms of assembly, homohexamer.

Functionally, RNA chaperone that binds small regulatory RNA (sRNAs) and mRNAs to facilitate mRNA translational regulation in response to envelope stress, environmental stress and changes in metabolite concentrations. Also binds with high specificity to tRNAs. In Photorhabdus laumondii subsp. laumondii (strain DSM 15139 / CIP 105565 / TT01) (Photorhabdus luminescens subsp. laumondii), this protein is RNA-binding protein Hfq.